A 286-amino-acid chain; its full sequence is General stress protein A (286 aa).

Residues 12-17 (CADDNY) and 111-112 (DC) each bind UDP. Mn(2+) contacts are provided by D111, D113, and H247. 247–253 (HFCGGEK) contributes to the UDP binding site.

Belongs to the glycosyltransferase 8 family.

The protein is General stress protein A (gspA) of Bacillus subtilis (strain 168).